The chain runs to 399 residues: MSETLYTGISQLATPRPGPQRGAAMGDLHIIEDAALLVRGGVIQWVGPRAAAPTATHVHDLGGRAVVPGLVDPHTHAVWAGDRLSDWEAKLQGATYEEILARGGGIRSTMRATAAADVAELVALARPRLASLRASGATTTEVKSGYGLDFDAELRMLRAVRELQAEFELRPTLLIHVPPQEGRAEYVVGVCAELIPQVAREGLAEALDVFCEKEAFSVEETRTMFAAAQAHGLRVKLHADQFHAIGGTELACEVGALSVDHLEASGAAQIAALAASETVATILPGVTLHLGLPAAPGRQLIDSGAIVAIGTDLNPGSSPLFSTQLALALAVRLCLLTPAEALSACTVNAAYALGLSDRGSLSAGQRADFLVLNGQDWREVAYTLGGNAVAEVYLAGAQL.

The segment covering 1–13 (MSETLYTGISQLA) has biased composition (polar residues). The tract at residues 1-20 (MSETLYTGISQLATPRPGPQ) is disordered. 2 residues coordinate Fe(3+): His74 and His76. His74 and His76 together coordinate Zn(2+). Residues Arg83, Tyr146, and His176 each coordinate 4-imidazolone-5-propanoate. N-formimidoyl-L-glutamate is bound at residue Tyr146. Position 238 (His238) interacts with Fe(3+). His238 contributes to the Zn(2+) binding site. Gln241 contacts 4-imidazolone-5-propanoate. Asp312 lines the Fe(3+) pocket. Asp312 contacts Zn(2+). Asn314 and Gly316 together coordinate N-formimidoyl-L-glutamate. Residue Ser317 coordinates 4-imidazolone-5-propanoate.

The protein belongs to the metallo-dependent hydrolases superfamily. HutI family. The cofactor is Zn(2+). It depends on Fe(3+) as a cofactor.

The protein localises to the cytoplasm. It carries out the reaction 4-imidazolone-5-propanoate + H2O = N-formimidoyl-L-glutamate. It functions in the pathway amino-acid degradation; L-histidine degradation into L-glutamate; N-formimidoyl-L-glutamate from L-histidine: step 3/3. Its function is as follows. Catalyzes the hydrolytic cleavage of the carbon-nitrogen bond in imidazolone-5-propanoate to yield N-formimidoyl-L-glutamate. It is the third step in the universal histidine degradation pathway. This is Imidazolonepropionase from Deinococcus radiodurans (strain ATCC 13939 / DSM 20539 / JCM 16871 / CCUG 27074 / LMG 4051 / NBRC 15346 / NCIMB 9279 / VKM B-1422 / R1).